Here is an 868-residue protein sequence, read N- to C-terminus: Alanine--tRNA ligase (868 aa).

Zn(2+) is bound by residues H555, H559, C657, and H661. The tract at residues 828–847 (SQVGGKGGGRPDMAQAGGSE) is disordered.

The protein belongs to the class-II aminoacyl-tRNA synthetase family. Zn(2+) is required as a cofactor.

Its subcellular location is the cytoplasm. It catalyses the reaction tRNA(Ala) + L-alanine + ATP = L-alanyl-tRNA(Ala) + AMP + diphosphate. Catalyzes the attachment of alanine to tRNA(Ala) in a two-step reaction: alanine is first activated by ATP to form Ala-AMP and then transferred to the acceptor end of tRNA(Ala). Also edits incorrectly charged Ser-tRNA(Ala) and Gly-tRNA(Ala) via its editing domain. This Pseudoalteromonas translucida (strain TAC 125) protein is Alanine--tRNA ligase.